The primary structure comprises 271 residues: Thiazole synthase (271 aa).

Lys-108 serves as the catalytic Schiff-base intermediate with DXP. 1-deoxy-D-xylulose 5-phosphate-binding positions include Gly-169, 195–196 (AG), and 217–218 (NS).

The protein belongs to the ThiG family. As to quaternary structure, homotetramer. Forms heterodimers with either ThiH or ThiS.

The protein localises to the cytoplasm. It catalyses the reaction [ThiS sulfur-carrier protein]-C-terminal-Gly-aminoethanethioate + 2-iminoacetate + 1-deoxy-D-xylulose 5-phosphate = [ThiS sulfur-carrier protein]-C-terminal Gly-Gly + 2-[(2R,5Z)-2-carboxy-4-methylthiazol-5(2H)-ylidene]ethyl phosphate + 2 H2O + H(+). It participates in cofactor biosynthesis; thiamine diphosphate biosynthesis. In terms of biological role, catalyzes the rearrangement of 1-deoxy-D-xylulose 5-phosphate (DXP) to produce the thiazole phosphate moiety of thiamine. Sulfur is provided by the thiocarboxylate moiety of the carrier protein ThiS. In vitro, sulfur can be provided by H(2)S. In Prochlorococcus marinus (strain SARG / CCMP1375 / SS120), this protein is Thiazole synthase.